Reading from the N-terminus, the 291-residue chain is MAVRMMQGVQAVYLESDAFLVCLNHALSTEKEEVMGLCIGQLNDHGRSDSRLAYAGAEMCTVAKKMEATRIVHIHSVIILRRSDKTKDRVEISPEQLSAASIEAERLAEQTGRPMRVVGWYHSHPHITVWPSHVDVRTQAMYQMMDQSFVGLIFACFIEDKPTKIGRVLYTCFQSVQASKSSEYERLEIPIHIVPRTTIGTVCLRSAIELPGILCQEEQEAYRRIHGLTHLDSVTKIHNGSVFTKHLCSQMSAVCGPLLQWLEDRLEQNQQRLQELEQEKEDLMEELSSLE.

One can recognise an MPN domain in the interval 12–179 (VYLESDAFLV…YTCFQSVQAS (168 aa)). The Zn(2+) site is built by His-122, His-124, and Asp-135. The JAMM motif signature appears at 122 to 135 (HSHPHITVWPSHVD). The stretch at 259–286 (LQWLEDRLEQNQQRLQELEQEKEDLMEE) forms a coiled coil.

This sequence belongs to the peptidase M67A family. BRCC36 subfamily.

Metalloprotease that specifically cleaves 'Lys-63'-linked polyubiquitin chains. The protein is Lys-63-specific deubiquitinase BRCC36-like of Mus musculus (Mouse).